The sequence spans 269 residues: Interleukin-1 beta (269 aa).

A propeptide spanning residues 1-117 (MATVPELNCE…DDDDNLLVCD (117 aa)) is cleaved from the precursor.

The protein belongs to the IL-1 family. As to quaternary structure, monomer. Interacts with MEFV. Interacts with integrins ITGAV:ITGBV and ITGA5:ITGB1; integrin-binding is required for IL1B signaling. Interacts with cargo receptor TMED10; the interaction is direct and is required for the secretion of IL1B mature form. Interacts with HSP90AB1; the interaction facilitates cargo translocation into the ERGIC. Interacts with HSP90B1; the interaction facilitates cargo translocation into the ERGIC. Expressed in activated macrophages (at protein level).

The protein resides in the cytoplasm. It localises to the cytosol. Its subcellular location is the secreted. The protein localises to the lysosome. It is found in the extracellular exosome. Functionally, potent pro-inflammatory cytokine. Initially discovered as the major endogenous pyrogen, induces prostaglandin synthesis, neutrophil influx and activation, T-cell activation and cytokine production, B-cell activation and antibody production, and fibroblast proliferation and collagen production. Promotes Th17 differentiation of T-cells. Synergizes with IL12/interleukin-12 to induce IFNG synthesis from T-helper 1 (Th1) cells. Plays a role in angiogenesis by inducing VEGF production synergistically with TNF and IL6. Involved in transduction of inflammation downstream of pyroptosis: its mature form is specifically released in the extracellular milieu by passing through the gasdermin-D (GSDMD) pore. The protein is Interleukin-1 beta (Il1b) of Mus musculus (Mouse).